Reading from the N-terminus, the 369-residue chain is Methylthioribose-1-phosphate isomerase (369 aa).

Position 1 is an N-acetylmethionine (Met1). Arg158 is subject to Omega-N-methylarginine. The active-site Proton donor is Asp248. Position 366 is a phosphoserine (Ser366).

It belongs to the eIF-2B alpha/beta/delta subunits family. MtnA subfamily.

It is found in the cytoplasm. The protein localises to the nucleus. The catalysed reaction is 5-(methylsulfanyl)-alpha-D-ribose 1-phosphate = 5-(methylsulfanyl)-D-ribulose 1-phosphate. The protein operates within amino-acid biosynthesis; L-methionine biosynthesis via salvage pathway; L-methionine from S-methyl-5-thio-alpha-D-ribose 1-phosphate: step 1/6. Catalyzes the interconversion of methylthioribose-1-phosphate (MTR-1-P) into methylthioribulose-1-phosphate (MTRu-1-P). This is Methylthioribose-1-phosphate isomerase (Mri1) from Rattus norvegicus (Rat).